Reading from the N-terminus, the 277-residue chain is MDTQPIVLVITDSVTLHAAIVSWGLQNFQVKAEDLHVITQADRLEGKLNLKSSSLDAVVSISALHTQQWLLELARVLRPGGIIVLQNPNSVNDDVKETLSALERILLLAGFVLSEGADGSIDGLGPLAVKGRKPAWDTGSSFKLKKKVAQKPANVVTFDIPAFKVQLGDDLDDLIDEDSLLTEEDLKKPDLPPVDDCEVGKAGRKACKNCTCGRVEMEEKQEKLGLPSDLLDNPQSSCGSCGLGDAFRCSTCPYKGLPPFKLGEKISLSQSFLTADI.

The tract at residues 1–141 is N-terminal SAM-like domain; it reads MDTQPIVLVI…RKPAWDTGSS (141 aa). The linker stretch occupies residues 141–186; it reads SFKLKKKVAQKPANVVTFDIPAFKVQLGDDLDDLIDEDSLLTEEDL. Residues C197, C207, C210, and C212 each coordinate [2Fe-2S] cluster. The interval 197–212 is fe-S binding site A; it reads CEVGKAGRKACKNCTC. [4Fe-4S] cluster contacts are provided by C238, C241, C249, and C252. 2 consecutive short sequence motifs (cx2C motif) follow at residues 238–241 and 249–252; these read CGSC and CSTC. Residues 238–252 are fe-S binding site B; the sequence is CGSCGLGDAFRCSTC.

Belongs to the anamorsin family. Monomer. [2Fe-2S] cluster serves as cofactor. Requires [4Fe-4S] cluster as cofactor.

It is found in the cytoplasm. The protein resides in the mitochondrion intermembrane space. Component of the cytosolic iron-sulfur (Fe-S) protein assembly (CIA) machinery. Required for the maturation of extramitochondrial Fe-S proteins. Part of an electron transfer chain functioning in an early step of cytosolic Fe-S biogenesis, facilitating the de novo assembly of a [4Fe-4S] cluster on the cytosolic Fe-S scaffold complex. Electrons are transferred from NADPH via a FAD- and FMN-containing diflavin oxidoreductase. Together with the diflavin oxidoreductase, also required for the assembly of the diferric tyrosyl radical cofactor of ribonucleotide reductase (RNR), probably by providing electrons for reduction during radical cofactor maturation in the catalytic small subunit. The protein is Anamorsin homolog 2 of Picea sitchensis (Sitka spruce).